The sequence spans 152 residues: MPAHSLVMSSPALPAFLLCSTLLVIKMYVVAIITGQVRLRKKAFANPEDALRHGGPQYCRSDPDVERCLRAHRNDMETIYPFLFLGFVYSFLGPNPFVAWMHFLVFLVGRVAHTVAYLGKLRAPIRSVTYTLAQLPCASMALQILWEAARHL.

Residues 1–12 (MPAHSLVMSSPA) lie on the Lumenal side of the membrane. Residues 13–41 (LPAFLLCSTLLVIKMYVVAIITGQVRLRK) traverse the membrane as a helical segment. A glutathione-binding site is contributed by R38. At 42–60 (KAFANPEDALRHGGPQYCR) the chain is on the cytoplasmic side. Residues 61-90 (SDPDVERCLRAHRNDMETIYPFLFLGFVYS) traverse the membrane as a helical segment. 73-77 (RNDME) lines the glutathione pocket. The Lumenal segment spans residues 91–95 (FLGPN). Residues 96 to 119 (PFVAWMHFLVFLVGRVAHTVAYLG) form a helical membrane-spanning segment. Residues H113 and Y117 each contribute to the glutathione site. Over 120-123 (KLRA) the chain is Cytoplasmic. The helical transmembrane segment at 124–152 (PIRSVTYTLAQLPCASMALQILWEAARHL) threads the bilayer. A glutathione-binding site is contributed by 126–130 (RSVTY).

The protein belongs to the MAPEG family. As to quaternary structure, homotrimer. It depends on glutathione as a cofactor.

The protein resides in the membrane. The protein localises to the cytoplasm. It localises to the perinuclear region. The catalysed reaction is prostaglandin H2 = prostaglandin E2. It catalyses the reaction 2-glyceryl-prostaglandin H2 = 2-glyceryl-prostaglandin E2. The enzyme catalyses prostaglandin G2 = (15S)-15-hydroperoxy-prostaglandin E2. It carries out the reaction 1-chloro-2,4-dinitrobenzene + glutathione = 2,4-dinitrophenyl-S-glutathione + chloride + H(+). The catalysed reaction is (5S)-hydroperoxy-(6E,8Z,11Z,14Z)-eicosatetraenoate + 2 glutathione = (5S)-hydroxy-(6E,8Z,11Z,14Z)-eicosatetraenoate + glutathione disulfide + H2O. The protein operates within lipid metabolism; prostaglandin biosynthesis. Induced by interleukin IL1B. Its function is as follows. Terminal enzyme of the cyclooxygenase (COX)-2-mediated prostaglandin E2 (PGE2) biosynthetic pathway. Catalyzes the glutathione-dependent oxidoreduction of prostaglandin endoperoxide H2 (PGH2) to prostaglandin E2 (PGE2) in response to inflammatory stimuli. Plays a key role in inflammation response, fever and pain. Also catalyzes the oxidoreduction of endocannabinoids into prostaglandin glycerol esters and PGG2 into 15-hydroperoxy-PGE2. In addition, displays low glutathione transferase and glutathione-dependent peroxidase activities, toward 1-chloro-2,4-dinitrobenzene and 5-hydroperoxyicosatetraenoic acid (5-HPETE), respectively. This Homo sapiens (Human) protein is Prostaglandin E synthase (PTGES).